Here is a 557-residue protein sequence, read N- to C-terminus: Arginine--tRNA ligase (557 aa).

The 'HIGH' region motif lies at 132–142 (ANPTGLLHMGN).

This sequence belongs to the class-I aminoacyl-tRNA synthetase family. As to quaternary structure, monomer.

It is found in the cytoplasm. It catalyses the reaction tRNA(Arg) + L-arginine + ATP = L-arginyl-tRNA(Arg) + AMP + diphosphate. The polypeptide is Arginine--tRNA ligase (Carboxydothermus hydrogenoformans (strain ATCC BAA-161 / DSM 6008 / Z-2901)).